A 185-amino-acid polypeptide reads, in one-letter code: Elongation factor P (185 aa).

The protein belongs to the elongation factor P family.

It localises to the cytoplasm. The protein operates within protein biosynthesis; polypeptide chain elongation. Involved in peptide bond synthesis. Stimulates efficient translation and peptide-bond synthesis on native or reconstituted 70S ribosomes in vitro. Probably functions indirectly by altering the affinity of the ribosome for aminoacyl-tRNA, thus increasing their reactivity as acceptors for peptidyl transferase. The polypeptide is Elongation factor P (Rippkaea orientalis (strain PCC 8801 / RF-1) (Cyanothece sp. (strain PCC 8801))).